A 426-amino-acid polypeptide reads, in one-letter code: Endoglucanase (426 aa).

The signal sequence occupies residues 1–19 (MRRCMPLVAASVAALMLAG). C20 carries the N-palmitoyl cysteine lipid modification. The S-diacylglycerol cysteine moiety is linked to residue C20. Positions 20–45 (CGGGDGDPSLSTASVSATDTTTLKPA) are excised as a propeptide. The active-site Proton donor is E249. Residue E361 is the Nucleophile of the active site.

It belongs to the glycosyl hydrolase 5 (cellulase A) family.

It localises to the cell membrane. It catalyses the reaction Endohydrolysis of (1-&gt;4)-beta-D-glucosidic linkages in cellulose, lichenin and cereal beta-D-glucans.. This Ralstonia solanacearum (Pseudomonas solanacearum) protein is Endoglucanase (egl).